Reading from the N-terminus, the 388-residue chain is Dipeptidase verJ (388 aa).

Residues H29, D31, and E142 each coordinate Zn(2+). Positions 169, 243, and 300 each coordinate substrate.

The protein belongs to the metallo-dependent hydrolases superfamily. Peptidase M19 family. Zn(2+) is required as a cofactor.

It catalyses the reaction an L-aminoacyl-L-amino acid + H2O = 2 an L-alpha-amino acid. Its pathway is mycotoxin biosynthesis. Its function is as follows. Dipeptidase; part of the gene cluster that mediates the biosynthesis of 11'-deoxyverticillin A, one of the dimeric epipolythiodioxopiperazines (ETPs) from the verticillin family that act as mycotoxins. 11'-deoxyverticillin A is required for normal conidiation. The nonribosomal peptide synthetase verP is speculated to be responsible for condensation of amino acids to form the carbon skeleton of verticillin, whereas the cluster-specific tailoring enzymes are involved in further modifications leading to the production of 11'-deoxyverticillin A. The chain is Dipeptidase verJ from Clonostachys rogersoniana.